Here is a 290-residue protein sequence, read N- to C-terminus: ATP synthase gamma chain (290 aa).

It belongs to the ATPase gamma chain family. As to quaternary structure, F-type ATPases have 2 components, CF(1) - the catalytic core - and CF(0) - the membrane proton channel. CF(1) has five subunits: alpha(3), beta(3), gamma(1), delta(1), epsilon(1). CF(0) has three main subunits: a, b and c.

Its subcellular location is the cell inner membrane. Produces ATP from ADP in the presence of a proton gradient across the membrane. The gamma chain is believed to be important in regulating ATPase activity and the flow of protons through the CF(0) complex. In Desulfotalea psychrophila (strain LSv54 / DSM 12343), this protein is ATP synthase gamma chain.